Reading from the N-terminus, the 338-residue chain is Aspartate-semialdehyde dehydrogenase (338 aa).

NADP(+)-binding positions include 13–16 (TGNV) and 41–42 (NS). Arg-101 provides a ligand contact to phosphate. The active-site Acyl-thioester intermediate is the Cys-132. Gln-159 lines the substrate pocket. Residues 162–163 (SG) and Pro-187 contribute to the NADP(+) site. Lys-216 is a binding site for phosphate. Residue Arg-237 participates in substrate binding. Catalysis depends on His-244, which acts as the Proton acceptor. Asn-317 lines the NADP(+) pocket.

The protein belongs to the aspartate-semialdehyde dehydrogenase family. Homodimer.

It carries out the reaction L-aspartate 4-semialdehyde + phosphate + NADP(+) = 4-phospho-L-aspartate + NADPH + H(+). The protein operates within amino-acid biosynthesis; L-lysine biosynthesis via DAP pathway; (S)-tetrahydrodipicolinate from L-aspartate: step 2/4. It participates in amino-acid biosynthesis; L-methionine biosynthesis via de novo pathway; L-homoserine from L-aspartate: step 2/3. It functions in the pathway amino-acid biosynthesis; L-threonine biosynthesis; L-threonine from L-aspartate: step 2/5. Functionally, catalyzes the NADPH-dependent formation of L-aspartate-semialdehyde (L-ASA) by the reductive dephosphorylation of L-aspartyl-4-phosphate. The polypeptide is Aspartate-semialdehyde dehydrogenase (Rickettsia typhi (strain ATCC VR-144 / Wilmington)).